Reading from the N-terminus, the 385-residue chain is Probable tRNA sulfurtransferase (385 aa).

Positions 57-161 constitute a THUMP domain; that stretch reads NESIKRLSNV…NKNAYVWSNK (105 aa). ATP-binding positions include 181 to 182, 206 to 207, arginine 263, glycine 285, and glutamine 294; these read ML and YY.

The protein belongs to the ThiI family.

Its subcellular location is the cytoplasm. The catalysed reaction is [ThiI sulfur-carrier protein]-S-sulfanyl-L-cysteine + a uridine in tRNA + 2 reduced [2Fe-2S]-[ferredoxin] + ATP + H(+) = [ThiI sulfur-carrier protein]-L-cysteine + a 4-thiouridine in tRNA + 2 oxidized [2Fe-2S]-[ferredoxin] + AMP + diphosphate. It carries out the reaction [ThiS sulfur-carrier protein]-C-terminal Gly-Gly-AMP + S-sulfanyl-L-cysteinyl-[cysteine desulfurase] + AH2 = [ThiS sulfur-carrier protein]-C-terminal-Gly-aminoethanethioate + L-cysteinyl-[cysteine desulfurase] + A + AMP + 2 H(+). The protein operates within cofactor biosynthesis; thiamine diphosphate biosynthesis. Its function is as follows. Catalyzes the ATP-dependent transfer of a sulfur to tRNA to produce 4-thiouridine in position 8 of tRNAs, which functions as a near-UV photosensor. Also catalyzes the transfer of sulfur to the sulfur carrier protein ThiS, forming ThiS-thiocarboxylate. This is a step in the synthesis of thiazole, in the thiamine biosynthesis pathway. The sulfur is donated as persulfide by IscS. In Clostridium botulinum (strain Alaska E43 / Type E3), this protein is Probable tRNA sulfurtransferase.